Here is a 250-residue protein sequence, read N- to C-terminus: MSFKVAIPARYASTRLPGKPLLMLGGKPMIQHVHERALACGAEEVVIATDDTRISDVAEGFGARVVLTDAHHESGSDRIAEVATELGWRDDDIVVNLQGDEPLTPPDILHQVAEALERHTDAAMATLCTPIETVEQMLDPNVVKVVRDAADYALYFSRAPIPWDRNVGRDVTHRSLEGCHRHIGLYAYRVGFLKAFAAMSPCALELTERLEQLRALHAGARIQCPVASQVPGQGVDVSSDVERVEKLLRA.

Belongs to the KdsB family.

The protein localises to the cytoplasm. The enzyme catalyses 3-deoxy-alpha-D-manno-oct-2-ulosonate + CTP = CMP-3-deoxy-beta-D-manno-octulosonate + diphosphate. It participates in nucleotide-sugar biosynthesis; CMP-3-deoxy-D-manno-octulosonate biosynthesis; CMP-3-deoxy-D-manno-octulosonate from 3-deoxy-D-manno-octulosonate and CTP: step 1/1. The protein operates within bacterial outer membrane biogenesis; lipopolysaccharide biosynthesis. Functionally, activates KDO (a required 8-carbon sugar) for incorporation into bacterial lipopolysaccharide in Gram-negative bacteria. This is 3-deoxy-manno-octulosonate cytidylyltransferase from Thioalkalivibrio sulfidiphilus (strain HL-EbGR7).